A 264-amino-acid chain; its full sequence is Nicotinamide N-methyltransferase (264 aa).

The residue at position 18 (Arg-18) is a Citrulline; alternate. Positions 20 and 25 each coordinate S-adenosyl-L-methionine. Lys-39 carries the N6-acetyllysine modification. 4 residues coordinate S-adenosyl-L-methionine: Gly-63, Tyr-69, Asp-85, and Asn-90. Arg-132 carries the citrulline; alternate modification. S-adenosyl-L-methionine-binding positions include 142 to 143 (DV) and Thr-163. Arg-181 carries the citrulline; alternate modification. 2 residues coordinate nicotinamide: Asp-197 and Ser-213.

The protein belongs to the class I-like SAM-binding methyltransferase superfamily. NNMT/PNMT/TEMT family. In terms of assembly, monomer. Post-translationally, deiminated by PADI1 and PADI2. Predominantly expressed in the liver. A lower expression is seen in the kidney, lung, skeletal muscle, placenta and heart. Not detected in the brain or pancreas.

It localises to the cytoplasm. The enzyme catalyses nicotinamide + S-adenosyl-L-methionine = 1-methylnicotinamide + S-adenosyl-L-homocysteine. It functions in the pathway cofactor metabolism. It participates in amino-acid degradation. Inactivated by deimination on Arg-132. Catalyzes the N-methylation of nicotinamide using the universal methyl donor S-adenosyl-L-methionine to form N1-methylnicotinamide and S-adenosyl-L-homocysteine, a predominant nicotinamide/vitamin B3 clearance pathway. Plays a central role in regulating cellular methylation potential, by consuming S-adenosyl-L-methionine and limiting its availability for other methyltransferases. Actively mediates genome-wide epigenetic and transcriptional changes through hypomethylation of repressive chromatin marks, such as H3K27me3. In a developmental context, contributes to low levels of the repressive histone marks that characterize pluripotent embryonic stem cell pre-implantation state. Acts as a metabolic regulator primarily on white adipose tissue energy expenditure as well as hepatic gluconeogenesis and cholesterol biosynthesis. In white adipocytes, regulates polyamine flux by consuming S-adenosyl-L-methionine which provides for propylamine group in polyamine biosynthesis, whereas by consuming nicotinamide controls NAD(+) levels through the salvage pathway. Via its product N1-methylnicotinamide regulates protein acetylation in hepatocytes, by repressing the ubiquitination and increasing the stability of SIRT1 deacetylase. Can also N-methylate other pyridines structurally related to nicotinamide and play a role in xenobiotic detoxification. The chain is Nicotinamide N-methyltransferase from Homo sapiens (Human).